A 304-amino-acid polypeptide reads, in one-letter code: tRNA pseudouridine synthase B (304 aa).

D38 serves as the catalytic Nucleophile.

The protein belongs to the pseudouridine synthase TruB family. Type 1 subfamily.

It carries out the reaction uridine(55) in tRNA = pseudouridine(55) in tRNA. In terms of biological role, responsible for synthesis of pseudouridine from uracil-55 in the psi GC loop of transfer RNAs. The chain is tRNA pseudouridine synthase B from Listeria monocytogenes serotype 4b (strain F2365).